The chain runs to 1203 residues: DNA-directed RNA polymerase subunit beta (1203 aa).

A disordered region spans residues 1167 to 1203; sequence LSKYAQQQEEQRKAAAQTDESKTAPATKNESQPNTQD. Positions 1190-1203 are enriched in polar residues; it reads APATKNESQPNTQD.

It belongs to the RNA polymerase beta chain family. In terms of assembly, the RNAP catalytic core consists of 2 alpha, 1 beta, 1 beta' and 1 omega subunit. When a sigma factor is associated with the core the holoenzyme is formed, which can initiate transcription.

It carries out the reaction RNA(n) + a ribonucleoside 5'-triphosphate = RNA(n+1) + diphosphate. DNA-dependent RNA polymerase catalyzes the transcription of DNA into RNA using the four ribonucleoside triphosphates as substrates. The sequence is that of DNA-directed RNA polymerase subunit beta from Levilactobacillus brevis (strain ATCC 367 / BCRC 12310 / CIP 105137 / JCM 1170 / LMG 11437 / NCIMB 947 / NCTC 947) (Lactobacillus brevis).